The chain runs to 425 residues: MDLQLPRGTRDILPEEVSKWHFLETEFKKVCENYQYEEIRTPVFEHTELFERGVGDSTDIVSKEMYTFQDKGGRSLTLRPEGTASVVRAFVEHKLYGEVSQPIKMYYNEPMFRYERPQGGRQRQFTQMGIEALGSDDPSIDVEVISLAMEFFRKIGLINIKLVINSLGDKESRLKHREALVAHFEPHIDEFCAECQVRLHKNPLRILDCKKDHDNPLIQSAPSILDFLNEESVAYFENVKKYLNALEIPFEIDSTMVRGLDYYNHTTFEIMSVEEGFGAKTTLCGGGRYHGLVREFGGPDTPGMGFGIGVERILLALEKADIKIPAKKPLEVYVITAQPEAELKAVTLVNKLRQNGISAEKDYLKRKFKAQLKDANRKNAVYTIILGEEELQTGNYQLKNMETGEQEAVSETTILEKLINTKGEN.

The protein belongs to the class-II aminoacyl-tRNA synthetase family. Homodimer.

The protein resides in the cytoplasm. The catalysed reaction is tRNA(His) + L-histidine + ATP = L-histidyl-tRNA(His) + AMP + diphosphate + H(+). The chain is Histidine--tRNA ligase from Listeria monocytogenes serotype 4b (strain F2365).